A 289-amino-acid chain; its full sequence is Pre-mRNA-splicing factor cwf23 (289 aa).

The J domain maps to 9–74 (DYYELLGINE…QLRKAYDSER (66 aa)). Positions 129–148 (ESANLRRQRENRLREEQEQS) are enriched in basic and acidic residues. 2 disordered regions span residues 129–161 (ESAN…SKIS) and 269–289 (KQKH…TMNA).

This sequence belongs to the DnaJ family. Belongs to the 40S cdc5-associated complex (or cwf complex), a spliceosome sub-complex reminiscent of a late-stage spliceosome composed of the U2, U5 and U6 snRNAs and at least brr2, cdc5, cwf2/prp3, cwf3/syf1, cwf4/syf3, cwf5/ecm2, spp42/cwf6, cwf7/spf27, cwf8, cwf9, cwf10, cwf11, cwf12, prp45/cwf13, cwf14, cwf15, cwf16, cwf17, cwf18, cwf19, cwf20, cwf21, cwf22, cwf23, cwf24, cwf25, cwf26, cyp7/cwf27, cwf28, cwf29/ist3, lea1, msl1, prp5/cwf1, prp10, prp12/sap130, prp17, prp22, sap61, sap62, sap114, sap145, slu7, smb1, smd1, smd3, smf1, smg1 and syf2.

The protein localises to the cytoplasm. It localises to the nucleus. Involved in pre-mRNA splicing. May be involved in endoplasmic reticulum-associated protein degradation (ERAD) and required for growth at low and high temperatures. The chain is Pre-mRNA-splicing factor cwf23 (cwf23) from Schizosaccharomyces pombe (strain 972 / ATCC 24843) (Fission yeast).